Reading from the N-terminus, the 75-residue chain is UPF0352 protein KPN78578_25810 (75 aa).

This sequence belongs to the UPF0352 family.

This chain is UPF0352 protein KPN78578_25810, found in Klebsiella pneumoniae subsp. pneumoniae (strain ATCC 700721 / MGH 78578).